Consider the following 221-residue polypeptide: Flagellar L-ring protein 1 (221 aa).

The N-terminal stretch at 1–16 (MKRFLILTPMVLALCG) is a signal peptide. Cysteine 17 carries N-palmitoyl cysteine lipidation. Residue cysteine 17 is the site of S-diacylglycerol cysteine attachment.

This sequence belongs to the FlgH family. The basal body constitutes a major portion of the flagellar organelle and consists of four rings (L,P,S, and M) mounted on a central rod.

It localises to the cell outer membrane. The protein localises to the bacterial flagellum basal body. Its function is as follows. Assembles around the rod to form the L-ring and probably protects the motor/basal body from shearing forces during rotation. The chain is Flagellar L-ring protein 1 from Yersinia pestis.